The sequence spans 33 residues: Vejocalcin (33 aa).

3 disulfide bridges follow: cysteine 3–cysteine 17, cysteine 10–cysteine 21, and cysteine 16–cysteine 32. The essential for stimulation of [3H]ryanodine binding to RYR1 stretch occupies residues 23–24 (RR).

As to expression, expressed by the venom gland.

It localises to the secreted. In terms of biological role, this toxin stabilizes ryanodine receptor 1 (RyR1) opening in a long-lasting subconductance state (60% of the full conductance state). Furthermore, it triggers calcium release from sarcoplasmic vesicles (31 nM are enough to induce a sharp release, and 65% of the total calcium is released after toxin (100 nM) addition) probably by acting as a cell-penetrating peptide (CPP). In addition, it has been shown to dose-dependently stimulate ryanodine binding to RyR1 (EC(50)=3.7 nM). It also augments the bell-shaped calcium-[3H]ryanodine binding curve that is maximal at about 10 uM calcium concentration. It binds a different site as ryanodine. It acts synergistically with caffeine. In vivo, intracerebroventricular injection into mice induces neurotoxic symptoms, followed by death. The chain is Vejocalcin from Vaejovis mexicanus (Mexican scorpion).